The chain runs to 595 residues: Transketolase-like protein 1 (595 aa).

Residue 93–95 (GWP) participates in thiamine diphosphate binding. 3 residues coordinate Mg(2+): Asp-125, Asn-155, and Ile-157. Asn-155 is a thiamine diphosphate binding site. Residues Lys-217, Glu-339, and Phe-365 each contribute to the thiamine diphosphate site. Catalysis depends on Glu-339, which acts as the Proton donor. Residues His-389 and Asp-397 each contribute to the substrate site. His-401 is a binding site for thiamine diphosphate.

The protein belongs to the transketolase family. As to quaternary structure, homodimer. The cofactor is Mg(2+). It depends on Ca(2+) as a cofactor. Mn(2+) is required as a cofactor. Requires Co(2+) as cofactor. Thiamine diphosphate serves as cofactor. In terms of tissue distribution, not expressed in the embryonic neocortex.

The protein localises to the cytoplasm. It catalyses the reaction D-sedoheptulose 7-phosphate + D-glyceraldehyde 3-phosphate = aldehydo-D-ribose 5-phosphate + D-xylulose 5-phosphate. In terms of biological role, catalyzes the transfer of a two-carbon ketol group from a ketose donor to an aldose acceptor, via a covalent intermediate with the cofactor thiamine pyrophosphate. The chain is Transketolase-like protein 1 from Mus musculus (Mouse).